The primary structure comprises 90 residues: Probable Fe(2+)-trafficking protein (90 aa).

The protein belongs to the Fe(2+)-trafficking protein family. In terms of assembly, monomer.

Could be a mediator in iron transactions between iron acquisition and iron-requiring processes, such as synthesis and/or repair of Fe-S clusters in biosynthetic enzymes. This chain is Probable Fe(2+)-trafficking protein, found in Edwardsiella ictaluri (strain 93-146).